A 750-amino-acid polypeptide reads, in one-letter code: Photosystem I P700 chlorophyll a apoprotein A1 (750 aa).

Helical transmembrane passes span 72–95, 158–181, 197–221, 293–311, 348–371, 387–413, 435–457, and 532–550; these read VFSAHFGQLAVIFIWLSGMYFHGA, LYSTAIGGLVMAGLMLFAGWFHYH, LNHHLAGLLGLGSLSWAGHQIHVSL, TAHHHLAIAVLFLVAGHMY, WHAQLAINLALFGSLSIIVAHHMY, LSIFTHHTWIGGFCIVGGAAHAAIFMV, AIISHLNWVCIFLGFHSFGLYIH, and FLVHHIHAFTIHVTVLILL. Positions 574 and 583 each coordinate [4Fe-4S] cluster. A run of 2 helical transmembrane segments spans residues 590–611 and 664–686; these read HVFLGLFWMYNSLSIAIFHFSW and LSAYGLMFLGAHFVWAFSLMFLF. H675 contacts chlorophyll a'. M683 and Y691 together coordinate chlorophyll a. W692 is a binding site for phylloquinone. Residues 724 to 744 traverse the membrane as a helical segment; sequence AVGVAHYLLGGIATTWAFFLA.

Belongs to the PsaA/PsaB family. The PsaA/B heterodimer binds the P700 chlorophyll special pair and subsequent electron acceptors. PSI consists of a core antenna complex that captures photons, and an electron transfer chain that converts photonic excitation into a charge separation. The eukaryotic PSI reaction center is composed of at least 11 subunits. P700 is a chlorophyll a/chlorophyll a' dimer, A0 is one or more chlorophyll a, A1 is one or both phylloquinones and FX is a shared 4Fe-4S iron-sulfur center. is required as a cofactor.

Its subcellular location is the plastid. It is found in the chloroplast thylakoid membrane. The enzyme catalyses reduced [plastocyanin] + hnu + oxidized [2Fe-2S]-[ferredoxin] = oxidized [plastocyanin] + reduced [2Fe-2S]-[ferredoxin]. Its function is as follows. PsaA and PsaB bind P700, the primary electron donor of photosystem I (PSI), as well as the electron acceptors A0, A1 and FX. PSI is a plastocyanin-ferredoxin oxidoreductase, converting photonic excitation into a charge separation, which transfers an electron from the donor P700 chlorophyll pair to the spectroscopically characterized acceptors A0, A1, FX, FA and FB in turn. Oxidized P700 is reduced on the lumenal side of the thylakoid membrane by plastocyanin. The protein is Photosystem I P700 chlorophyll a apoprotein A1 of Chlorokybus atmophyticus (Soil alga).